The sequence spans 498 residues: MKKCWFHSMLSNVELEYRCRLSKSMDNLGPLENTSVSEDPILNDTEKNTYNWSHSDSSNVDHLVGVRDIRNLNVDDTFLVLGRDNKKDGYSIYFDIENQVFGIDNNHSFLSELEKEFSSYWNSSYLNKGSRSDDSHYDYSMYDNKYSWNNYINSCIDSYLRSQIGIASSILSGSENCSESYISTYILGESRNSSETGNSRLRTSTNGSDFALKENSNDLGVTQKYKHLWVQCEICYGLNYKKFFKSKMNICEQCGYHLKMSSSDRIELSIDPGTWDPMDEEMFSLDPIDFHSEEEPYKDRIDSYQKKTGLTEAIQTGIGQLNGIPVAIGVMDFQFMGGSMGSVVGEKITRLIEYATNQFLPLILVCASGGARMQEGSLSLMQMAKISSALYDYQSNKKLVYVSILTSPTTGGVTASFGMLGDIIIAEPNAYIAFAGKRVIEQTLNKTVPEGSQAAEFLFHKGLFDPIVPRNLLKGVLSELFQLHAFFPLNHNLSRTLT.

The CoA carboxyltransferase N-terminal domain maps to 228–498 (LWVQCEICYG…LNHNLSRTLT (271 aa)). Residues Cys-232, Cys-235, Cys-251, and Cys-254 each contribute to the Zn(2+) site. Residues 232–254 (CEICYGLNYKKFFKSKMNICEQC) form a C4-type zinc finger.

It belongs to the AccD/PCCB family. As to quaternary structure, acetyl-CoA carboxylase is a heterohexamer composed of biotin carboxyl carrier protein, biotin carboxylase and 2 subunits each of ACCase subunit alpha and ACCase plastid-coded subunit beta (accD). Requires Zn(2+) as cofactor.

It localises to the plastid. Its subcellular location is the chloroplast stroma. It catalyses the reaction N(6)-carboxybiotinyl-L-lysyl-[protein] + acetyl-CoA = N(6)-biotinyl-L-lysyl-[protein] + malonyl-CoA. The protein operates within lipid metabolism; malonyl-CoA biosynthesis; malonyl-CoA from acetyl-CoA: step 1/1. Functionally, component of the acetyl coenzyme A carboxylase (ACC) complex. Biotin carboxylase (BC) catalyzes the carboxylation of biotin on its carrier protein (BCCP) and then the CO(2) group is transferred by the transcarboxylase to acetyl-CoA to form malonyl-CoA. The polypeptide is Acetyl-coenzyme A carboxylase carboxyl transferase subunit beta, chloroplastic (Populus alba (White poplar)).